The sequence spans 295 residues: Polyadenylate-binding protein 2-B (295 aa).

The segment at 1 to 102 is disordered; sequence MAAVSSVASL…EEPGELTGDQ (102 aa). 2 stretches are compositionally biased toward gly residues: residues 19-31 and 71-81; these read LRGG…GGQD and GRGGSGGGAGG. Acidic residues predominate over residues 83–96; the sequence is EELEDEELEEEEPG. Residues 106-140 adopt a coiled-coil conformation; sequence DPELEAIKARVREMEEEAEKLKELQNEVEKQMNMS. The necessary for homooligomerization stretch occupies residues 145–295; that stretch reads NAGPVIMSVE…ARATSWYTPY (151 aa). The region spanning 162–239 is the RRM domain; sequence RSIYVGNVDY…RQIKVVPKRT (78 aa).

Monomer and homooligomer. Binds RNA as a monomer and oligomerizes when bound to poly(A).

It localises to the nucleus. It is found in the cytoplasm. Functionally, involved in the 3'-end formation of mRNA precursors (pre-mRNA) by the addition of a poly(A) tail of 200-250 nt to the upstream cleavage product. Stimulates poly(A) polymerase (PAPOLA) conferring processivity on the poly(A) tail elongation reaction and also controls the poly(A) tail length. Increases the affinity of poly(A) polymerase for RNA. Binds to poly(A) and to poly(G) with high affinity. May protect the poly(A) tail from degradation. This Xenopus laevis (African clawed frog) protein is Polyadenylate-binding protein 2-B (pabpn1-b).